A 192-amino-acid polypeptide reads, in one-letter code: Shikimate kinase (192 aa).

ATP is bound at residue 15-20 (GAGKTT). Residue threonine 19 coordinates Mg(2+). Substrate contacts are provided by aspartate 37, arginine 61, and glycine 83. Residue arginine 121 participates in ATP binding. Arginine 140 is a binding site for substrate.

The protein belongs to the shikimate kinase family. In terms of assembly, monomer. The cofactor is Mg(2+).

The protein resides in the cytoplasm. It carries out the reaction shikimate + ATP = 3-phosphoshikimate + ADP + H(+). It functions in the pathway metabolic intermediate biosynthesis; chorismate biosynthesis; chorismate from D-erythrose 4-phosphate and phosphoenolpyruvate: step 5/7. Functionally, catalyzes the specific phosphorylation of the 3-hydroxyl group of shikimic acid using ATP as a cosubstrate. This is Shikimate kinase from Cupriavidus pinatubonensis (strain JMP 134 / LMG 1197) (Cupriavidus necator (strain JMP 134)).